A 133-amino-acid chain; its full sequence is Small ribosomal subunit protein eS8 (133 aa).

Positions 1–22 are disordered; the sequence is MGFYQGPDNRKITGGLKGKHRD.

It belongs to the eukaryotic ribosomal protein eS8 family. As to quaternary structure, part of the 30S ribosomal subunit.

The protein is Small ribosomal subunit protein eS8 of Saccharolobus islandicus (strain M.14.25 / Kamchatka #1) (Sulfolobus islandicus).